A 211-amino-acid chain; its full sequence is Cytidylate kinase (211 aa).

Residue 9-17 (GPAAAGKGT) coordinates ATP.

The protein belongs to the cytidylate kinase family. Type 1 subfamily.

It is found in the cytoplasm. It carries out the reaction CMP + ATP = CDP + ADP. The enzyme catalyses dCMP + ATP = dCDP + ADP. This chain is Cytidylate kinase, found in Paramagnetospirillum magneticum (strain ATCC 700264 / AMB-1) (Magnetospirillum magneticum).